Here is a 246-residue protein sequence, read N- to C-terminus: Phycocyanobilin:ferredoxin oxidoreductase (246 aa).

It belongs to the HY2 family.

It carries out the reaction (2R,3Z)-phycocyanobilin + 4 oxidized [2Fe-2S]-[ferredoxin] = biliverdin IXalpha + 4 reduced [2Fe-2S]-[ferredoxin] + 4 H(+). Catalyzes the four-electron reduction of biliverdin IX-alpha (2-electron reduction at both the A and D rings); the reaction proceeds via an isolatable 2-electron intermediate, 181,182-dihydrobiliverdin. The sequence is that of Phycocyanobilin:ferredoxin oxidoreductase from Crocosphaera subtropica (strain ATCC 51142 / BH68) (Cyanothece sp. (strain ATCC 51142)).